The primary structure comprises 369 residues: mRNA cap guanine-N(7) methyltransferase 1 (369 aa).

Residues Met-1–Leu-55 form a disordered region. Positions Gly-22–Gly-32 are enriched in gly residues. Residues Tyr-33–Ser-48 are compositionally biased toward basic and acidic residues. The mRNA cap 0 methyltransferase domain maps to Ser-61 to Arg-340. Asn-70–Asn-71 provides a ligand contact to mRNA. S-adenosyl-L-methionine-binding positions include Lys-74, Ala-92, Asp-114, Asp-149–Cys-150, and Gln-171–Ala-173.

This sequence belongs to the class I-like SAM-binding methyltransferase superfamily. mRNA cap 0 methyltransferase family.

It localises to the nucleus. The enzyme catalyses a 5'-end (5'-triphosphoguanosine)-ribonucleoside in mRNA + S-adenosyl-L-methionine = a 5'-end (N(7)-methyl 5'-triphosphoguanosine)-ribonucleoside in mRNA + S-adenosyl-L-homocysteine. Its function is as follows. mRNA-capping methyltransferase that methylates the N7 position of the added guanosine to the 5'-cap structure of mRNAs. Binds RNA containing 5'-terminal GpppC. The sequence is that of mRNA cap guanine-N(7) methyltransferase 1 from Oryza sativa subsp. japonica (Rice).